A 259-amino-acid polypeptide reads, in one-letter code: Putative carbamate hydrolase RutD (259 aa).

The protein belongs to the AB hydrolase superfamily. Hydrolase RutD family.

The enzyme catalyses carbamate + 2 H(+) = NH4(+) + CO2. Its function is as follows. Involved in pyrimidine catabolism. May facilitate the hydrolysis of carbamate, a reaction that can also occur spontaneously. The chain is Putative carbamate hydrolase RutD from Pseudomonas syringae pv. syringae (strain B728a).